The primary structure comprises 410 residues: Tegument protein VP16 homolog (410 aa).

The interval 388–410 is disordered; sequence PPSPSEILPGDPPRPPTCGFLTR.

Belongs to the herpesviridae tegument protein VP16 protein family. In terms of assembly, associates with the VP16-induced complex; binding to host HCFC1 activates VP16 for association with the octamer motif-binding host protein POU2F1, to form a multiprotein-DNA complex responsible for activating transcription of the viral immediate early genes.

The protein localises to the virion tegument. It is found in the host nucleus. In terms of biological role, transcriptional activator of immediate-early (IE) gene products (alpha genes). Acts as a key activator of lytic infection by initiating the lytic program through the assembly of the transcriptional regulatory VP16-induced complex composed of VP16 and two cellular factors, HCFC1 and POU2F1. VP16-induced complex represents a regulatory switch: when it is on, it promotes IE-gene expression and thus lytic infection, and when it is off, it limits IE-gene transcription favoring latent infection. May play a role in the aggregation of tegument proteins around nucleocapsids during virus morphogenesis. The sequence is that of Tegument protein VP16 homolog from Varicella-zoster virus (strain Dumas) (HHV-3).